The primary structure comprises 488 residues: ATP synthase subunit beta, chloroplastic (488 aa).

ATP is bound at residue 170–177 (GGAGVGKT).

It belongs to the ATPase alpha/beta chains family. F-type ATPases have 2 components, CF(1) - the catalytic core - and CF(0) - the membrane proton channel. CF(1) has five subunits: alpha(3), beta(3), gamma(1), delta(1), epsilon(1). CF(0) has four main subunits: a(1), b(1), b'(1) and c(9-12).

The protein localises to the plastid. It is found in the chloroplast thylakoid membrane. It catalyses the reaction ATP + H2O + 4 H(+)(in) = ADP + phosphate + 5 H(+)(out). Its function is as follows. Produces ATP from ADP in the presence of a proton gradient across the membrane. The catalytic sites are hosted primarily by the beta subunits. The sequence is that of ATP synthase subunit beta, chloroplastic from Picea abies (Norway spruce).